The chain runs to 421 residues: Hydrolyase poxO (421 aa).

S239 serves as the catalytic Nucleophile.

The protein belongs to the AB hydrolase superfamily. FUS2 hydrolase family. As to quaternary structure, homodimer.

Its pathway is secondary metabolite biosynthesis. Functionally, hydrolyase; part of the gene cluster that mediates the biosynthesis of oxaleimides, cytotoxic compounds containing an unusual disubstituted succinimide moiety. The first step of the pathway is provided by the HR-PKS poxF that serves in a new mode of collaborative biosynthesis with the PKS-NRPS poxE, by providing the olefin containing amino acid substrate via the synthesis of an ACP-bound dec-4-enoate. The cytochrome P450 monooxygenase poxM-catalyzed oxidation at the alpha-position creates the enzyme-bound 2-hydroxydec-4-enoyl-ACP thioester, which may be prone to spontaneous hydrolysis to yield 2-hydroxydec-4-enoic acid due to increased electrophilicity of the carbonyl. 2-hydroxydec-4-enoic acid can then be further oxidized by poxM to yield the alpha-ketoacid 2-oxodec-4-enoicacid, which is reductively aminated by the aminotransferase poxL to yield (S,E)-2-aminodec-4-enoic acid. The Hybrid PKS-NRPS synthetase poxE then performs condensation between the octaketide product of its PKS modules and the amino group of (S,E)-2-aminodec-4-enoic acid which is activated and incorporated by the adenylation domain. The resulting aminoacyl product can be cyclized by the Diels-Alderase PoxQ and reductively released by the reductive (R) domain of poxE to yield an aldehyde intermediate. The released aldehyde is then substrate for a Knoevenagel condensation by the hydrolyase poxO followed by an oxidation at the 5-position of the pyrrolidone ring. The presence of the olefin from the amino acid building block allows for migration of the substituted allyl group to occur. This allylic transposition reaction takes place in a conjugate addition, semipinacol-like fashion to yield a succinimide intermediate. Iterative two-electron oxidations of the C7 methyl of the succinimide intermediate to the carboxylic acid can be catalyzed by one of two remaining cytochrome P450 monooxygenasess poxC or poxD to yield oxaleimide A. Subsequent oxidation yields the maleimide scaffold oxaleimide I. Both oxaleimide A and oxaleimide I can undergo oxidative modifications in the decalin ring to yield the series of products oxaleimides B to H. This Penicillium oxalicum protein is Hydrolyase poxO.